A 302-amino-acid chain; its full sequence is Putative F-box protein At1g32420 (302 aa).

Basic and acidic residues predominate over residues 1–10 (MKRGNEENNH). The interval 1 to 27 (MKRGNEENNHKTSSSSSTQRLSRRKIS) is disordered. An F-box domain is found at 31-78 (KSGNVNIPLDLTVEILKKLPAKSLLRFQCVSKQWLSIISSRRDFIDSI).

This chain is Putative F-box protein At1g32420, found in Arabidopsis thaliana (Mouse-ear cress).